The following is a 280-amino-acid chain: Probable endonuclease 4 (280 aa).

Zn(2+) is bound by residues His68, His108, Glu143, Asp177, His180, His214, Asp227, His229, and Glu259.

It belongs to the AP endonuclease 2 family. Requires Zn(2+) as cofactor.

The enzyme catalyses Endonucleolytic cleavage to 5'-phosphooligonucleotide end-products.. In terms of biological role, endonuclease IV plays a role in DNA repair. It cleaves phosphodiester bonds at apurinic or apyrimidinic (AP) sites, generating a 3'-hydroxyl group and a 5'-terminal sugar phosphate. The protein is Probable endonuclease 4 of Cenarchaeum symbiosum (strain A).